We begin with the raw amino-acid sequence, 60 residues long: Prophage outer membrane lipoprotein RzoD (60 aa).

Positions 1–19 are cleaved as a signal peptide; the sequence is MRKLKMMLCVMMLPLVVVG. Cys-20 is lipidated: N-palmitoyl cysteine. Cys-20 carries S-diacylglycerol cysteine lipidation.

Belongs to the lambdalikevirus o-spanin family. As to quaternary structure, homodimer; disulfide-linked. Interacts (via C-terminus) with RZ (via C-terminus). Part of the spanin complex which spans the entire periplasmic space. The spanin complex is composed of spanin, inner membrane subunit and spanin, outer membrane subunit.

The protein resides in the cell outer membrane. Functionally, component of the spanin complex that disrupts the outer membrane and causes cell lysis during virus exit. The spanin complex conducts the final step in cell lysis by disrupting the outer membrane after holin and endolysin action have permeabilized the inner membrane and degraded the host peptidoglycans. The sequence is that of Prophage outer membrane lipoprotein RzoD (rzoD) from Escherichia coli (strain K12).